The sequence spans 276 residues: Exosome complex component Rrp42 (276 aa).

The protein belongs to the RNase PH family. Rrp42 subfamily. As to quaternary structure, component of the archaeal exosome complex. Forms a hexameric ring-like arrangement composed of 3 Rrp41-Rrp42 heterodimers. The hexameric ring associates with a trimer of Rrp4 and/or Csl4 subunits.

It is found in the cytoplasm. Functionally, non-catalytic component of the exosome, which is a complex involved in RNA degradation. Contributes to the structuring of the Rrp41 active site. The sequence is that of Exosome complex component Rrp42 from Aeropyrum pernix (strain ATCC 700893 / DSM 11879 / JCM 9820 / NBRC 100138 / K1).